Reading from the N-terminus, the 387-residue chain is Delta(12)-acyl-lipid-desaturase (387 aa).

The interval 1 to 31 (MGAGGRMTVPNKWEGEGDEKSQKPVQRVPSA) is disordered. Residues 13-22 (WEGEGDEKSQ) are compositionally biased toward basic and acidic residues. A run of 2 helical transmembrane segments spans residues 58-78 (SYVL…TTYI) and 88-108 (AAWP…WVIA). The Histidine box-1 signature appears at 109–113 (HECGH). Residues 121 to 141 (WVDDCVGLVLHSALLVPYFSW) form a helical membrane-spanning segment. A Histidine box-2 motif is present at residues 145-149 (HRRHH). 3 consecutive transmembrane segments (helical) span residues 183–203 (VMTL…LNVS), 229–249 (IYIS…IAAA), and 251–271 (GLAW…AFLV). The short motif at 319-323 (HVAHH) is the Histidine box-3 element.

Belongs to the fatty acid desaturase type 1 family.

Its subcellular location is the membrane. Its pathway is lipid metabolism; polyunsaturated fatty acid biosynthesis. In terms of biological role, delta(12)-fatty acid desaturase producing in a heterologous system linoleic acid (18:2(9Z,12Z)) and to a lower extent hexadecadienoic acid (16:2(9Z,12Z)). The sequence is that of Delta(12)-acyl-lipid-desaturase from Punica granatum (Pomegranate).